A 477-amino-acid chain; its full sequence is Glycogen synthase (477 aa).

Residue lysine 15 participates in ADP-alpha-D-glucose binding.

Belongs to the glycosyltransferase 1 family. Bacterial/plant glycogen synthase subfamily.

The catalysed reaction is [(1-&gt;4)-alpha-D-glucosyl](n) + ADP-alpha-D-glucose = [(1-&gt;4)-alpha-D-glucosyl](n+1) + ADP + H(+). The protein operates within glycan biosynthesis; glycogen biosynthesis. Functionally, synthesizes alpha-1,4-glucan chains using ADP-glucose. This is Glycogen synthase from Glaesserella parasuis serovar 5 (strain SH0165) (Haemophilus parasuis).